The following is a 329-amino-acid chain: Prostaglandin reductase 1 (329 aa).

Thr-18 carries the phosphothreonine modification. Ser-20 carries the post-translational modification Phosphoserine. Residues 152-155 (GAVG), Lys-178, Tyr-193, Asn-217, 239-245 (CGAISQY), 270-272 (FIV), and Asn-321 contribute to the NADP(+) site. Residue Lys-178 is modified to N6-(2-hydroxyisobutyryl)lysine; alternate. The residue at position 178 (Lys-178) is an N6-acetyllysine; alternate.

The protein belongs to the NADP-dependent oxidoreductase L4BD family. In terms of assembly, monomer or homodimer.

The protein localises to the cytoplasm. The catalysed reaction is 13,14-dihydro-15-oxo-prostaglandin E1 + NADP(+) = 15-oxoprostaglandin E1 + NADPH + H(+). The enzyme catalyses 13,14-dihydro-15-oxo-prostaglandin E2 + NADP(+) = 15-oxoprostaglandin E2 + NADPH + H(+). It carries out the reaction 13,14-dihydro-15-oxo-prostaglandin F1alpha + NADP(+) = 15-oxoprostaglandin F1alpha + NADPH + H(+). It catalyses the reaction 13,14-dihydro-15-oxo-PGF2alpha + NADP(+) = 15-oxoprostaglandin F2alpha + NADPH + H(+). The catalysed reaction is leukotriene B4 + NADP(+) = 12-oxo-leukotriene B4 + NADPH + H(+). The enzyme catalyses 20-hydroxy-leukotriene B4 + NADP(+) = 12-oxo-20-hydroxy-leukotriene B4 + NADPH + H(+). It carries out the reaction 6-trans-leukotriene B4 + NADP(+) = 12-oxo-(5S)-hydroxy-(6E,8E,10E,14Z)-eicosatetraenoate + NADPH + H(+). It catalyses the reaction (5S,12S)-dihydroxy-(6E,10E,12E,14Z)-eicosatetraenoate + NADP(+) = 12-oxo-(5S)-hydroxy-(6E,8E,10E,14Z)-eicosatetraenoate + NADPH + H(+). The catalysed reaction is an n-alkanal + NADP(+) = an alk-2-enal + NADPH + H(+). The enzyme catalyses hexanal + NADP(+) = (E)-hex-2-enal + NADPH + H(+). It carries out the reaction octanal + NADP(+) = (2E)-octenal + NADPH + H(+). It catalyses the reaction decanal + NADP(+) = (2E)-decenal + NADPH + H(+). The catalysed reaction is dodecanal + NADP(+) = (2E)-dodecenal + NADPH + H(+). The enzyme catalyses 4-hydroxynonanal + NADP(+) = (E)-4-hydroxynon-2-enal + NADPH + H(+). It carries out the reaction pentan-2-one + NADP(+) = (E)-pent-3-en-2-one + NADPH + H(+). It catalyses the reaction nonan-2-one + NADP(+) = (3E)-nonen-2-one + NADPH + H(+). Its function is as follows. NAD(P)H-dependent oxidoreductase involved in metabolic inactivation of pro- and anti-inflammatory eicosanoids: prostaglandins (PG), leukotrienes (LT) and lipoxins (LX). Catalyzes with high efficiency the reduction of the 13,14 double bond of 15-oxoPGs, including 15-oxo-PGE1, 15-oxo-PGE2, 15-oxo-PGF1-alpha and 15-oxo-PGF2-alpha. Catalyzes with lower efficiency the oxidation of the hydroxyl group at C12 of LTB4 and its derivatives, converting them into biologically less active 12-oxo-LTB4 metabolites. Reduces 15-oxo-LXA4 to 13,14 dihydro-15-oxo-LXA4, enhancing neutrophil recruitment at the inflammatory site. Plays a role in metabolic detoxification of alkenals and ketones. Reduces alpha,beta-unsaturated alkenals and ketones, particularly those with medium-chain length, showing highest affinity toward (2E)-decenal and (3E)-3-nonen-2-one. Inactivates 4-hydroxy-2-nonenal, a cytotoxic lipid constituent of oxidized low-density lipoprotein particles. The protein is Prostaglandin reductase 1 (Ptgr1) of Rattus norvegicus (Rat).